The following is a 661-amino-acid chain: UvrABC system protein B (661 aa).

In terms of domain architecture, Helicase ATP-binding spans Glu23–Arg180. Residue Gly36–Thr43 participates in ATP binding. Positions Tyr89–Ile112 match the Beta-hairpin motif. Residues Gln426–Ile592 enclose the Helicase C-terminal domain. A UVR domain is found at Glu620 to Lys655.

Belongs to the UvrB family. In terms of assembly, forms a heterotetramer with UvrA during the search for lesions. Interacts with UvrC in an incision complex.

The protein localises to the cytoplasm. Functionally, the UvrABC repair system catalyzes the recognition and processing of DNA lesions. A damage recognition complex composed of 2 UvrA and 2 UvrB subunits scans DNA for abnormalities. Upon binding of the UvrA(2)B(2) complex to a putative damaged site, the DNA wraps around one UvrB monomer. DNA wrap is dependent on ATP binding by UvrB and probably causes local melting of the DNA helix, facilitating insertion of UvrB beta-hairpin between the DNA strands. Then UvrB probes one DNA strand for the presence of a lesion. If a lesion is found the UvrA subunits dissociate and the UvrB-DNA preincision complex is formed. This complex is subsequently bound by UvrC and the second UvrB is released. If no lesion is found, the DNA wraps around the other UvrB subunit that will check the other stand for damage. The sequence is that of UvrABC system protein B from Thermosipho africanus (strain TCF52B).